The sequence spans 156 residues: MTIHTDTRPTLNLIRLAHGRGLDLPAYETKGAAGMDLRAAIEDGTTLTLAPGKRALVPSGFIFEIPEGFEAQIRPRSGLAFKNGITCLNSPGTVDSDYRGEVKVLLINHGDEPFEITRGMRIAQVVIAPVTQVRVAEITEVSDTARGAGGFGSTGV.

Substrate-binding positions include Arg-76–Gly-78, Asn-89, Thr-93–Asp-95, and Lys-103.

Belongs to the dUTPase family. The cofactor is Mg(2+).

It catalyses the reaction dUTP + H2O = dUMP + diphosphate + H(+). Its pathway is pyrimidine metabolism; dUMP biosynthesis; dUMP from dCTP (dUTP route): step 2/2. In terms of biological role, this enzyme is involved in nucleotide metabolism: it produces dUMP, the immediate precursor of thymidine nucleotides and it decreases the intracellular concentration of dUTP so that uracil cannot be incorporated into DNA. The chain is Deoxyuridine 5'-triphosphate nucleotidohydrolase from Rhizobium rhizogenes (strain K84 / ATCC BAA-868) (Agrobacterium radiobacter).